A 222-amino-acid chain; its full sequence is Orotate phosphoribosyltransferase (222 aa).

Lys29 lines the 5-phospho-alpha-D-ribose 1-diphosphate pocket. 37-38 (FF) contacts orotate. Residues 75–76 (YK), Arg101, Lys102, Lys105, His107, and 126–134 (DDVISAGTS) contribute to the 5-phospho-alpha-D-ribose 1-diphosphate site. Positions 130 and 158 each coordinate orotate.

It belongs to the purine/pyrimidine phosphoribosyltransferase family. PyrE subfamily. As to quaternary structure, homodimer. The cofactor is Mg(2+).

It catalyses the reaction orotidine 5'-phosphate + diphosphate = orotate + 5-phospho-alpha-D-ribose 1-diphosphate. It participates in pyrimidine metabolism; UMP biosynthesis via de novo pathway; UMP from orotate: step 1/2. Catalyzes the transfer of a ribosyl phosphate group from 5-phosphoribose 1-diphosphate to orotate, leading to the formation of orotidine monophosphate (OMP). This Polynucleobacter necessarius subsp. necessarius (strain STIR1) protein is Orotate phosphoribosyltransferase.